The chain runs to 681 residues: Oligopeptidase A (681 aa).

Histidine 470 is a binding site for Zn(2+). Glutamate 471 is an active-site residue. Zn(2+) contacts are provided by histidine 474 and histidine 477.

It belongs to the peptidase M3 family. The cofactor is Zn(2+).

It catalyses the reaction Hydrolysis of oligopeptides, with broad specificity. Gly or Ala commonly occur as P1 or P1' residues, but more distant residues are also important, as is shown by the fact that Z-Gly-Pro-Gly-|-Gly-Pro-Ala is cleaved, but not Z-(Gly)(5).. Functionally, may play a specific role in the degradation of signal peptides after they are released from precursor forms of secreted proteins. Can cleave N-acetyl-L-Ala(4). The sequence is that of Oligopeptidase A (prlC) from Haemophilus influenzae (strain ATCC 51907 / DSM 11121 / KW20 / Rd).